A 404-amino-acid chain; its full sequence is Argininosuccinate synthase (404 aa).

Residues 10-18 (AYSGGVDTS) and Ala38 each bind ATP. Tyr89 provides a ligand contact to L-citrulline. Residue Gly119 participates in ATP binding. L-aspartate is bound by residues Thr121, Asn125, and Asp126. L-citrulline is bound at residue Asn125. L-citrulline-binding residues include Arg129, Ser177, Ser186, Glu262, and Tyr274.

It belongs to the argininosuccinate synthase family. Type 1 subfamily. In terms of assembly, homotetramer.

It localises to the cytoplasm. The enzyme catalyses L-citrulline + L-aspartate + ATP = 2-(N(omega)-L-arginino)succinate + AMP + diphosphate + H(+). It functions in the pathway amino-acid biosynthesis; L-arginine biosynthesis; L-arginine from L-ornithine and carbamoyl phosphate: step 2/3. This is Argininosuccinate synthase from Prochlorococcus marinus (strain MIT 9301).